Consider the following 539-residue polypeptide: 2,3-dihydroxybenzoate-AMP ligase (539 aa).

ATP is bound at residue G191. Substrate contacts are provided by residues 234–235 (HN) and S240. ATP is bound by residues G307, V329, D413, R428, and K519. K519 serves as a coordination point for substrate.

This sequence belongs to the ATP-dependent AMP-binding enzyme family.

It localises to the cytoplasm. The enzyme catalyses 2,3-dihydroxybenzoate + holo-[ACP] + ATP = 2,3-dihydroxybenzoyl-[ACP] + AMP + diphosphate. The protein operates within siderophore biosynthesis; bacillibactin biosynthesis. Its function is as follows. Involved in the biosynthesis of the catecholic siderophore bacillibactin. Catalyzes the activation of the carboxylate group of 2,3-dihydroxy-benzoate (DHB), via ATP-dependent PPi exchange reactions, to the acyladenylate. In Bacillus subtilis (strain 168), this protein is 2,3-dihydroxybenzoate-AMP ligase.